We begin with the raw amino-acid sequence, 214 residues long: Adenylate kinase (214 aa).

ATP is bound at residue 10–15; it reads GAGKGT. The tract at residues 30–59 is NMP; that stretch reads STGDMLRAAVKAGTPLGLEAKKVMDAGQLV. AMP contacts are provided by residues T31, R36, 57–59, 85–88, and Q92; these read QLV and GFPR. The segment at 122-159 is LID; sequence GRRVHPGSGRVYHVVFNPPKVEGKDDVTGEDLVIRPDD. Residues R123 and 132 to 133 each bind ATP; that span reads VY. 2 residues coordinate AMP: R156 and R167. Q200 lines the ATP pocket.

This sequence belongs to the adenylate kinase family. In terms of assembly, monomer.

The protein localises to the cytoplasm. It catalyses the reaction AMP + ATP = 2 ADP. Its pathway is purine metabolism; AMP biosynthesis via salvage pathway; AMP from ADP: step 1/1. Functionally, catalyzes the reversible transfer of the terminal phosphate group between ATP and AMP. Plays an important role in cellular energy homeostasis and in adenine nucleotide metabolism. This is Adenylate kinase from Shewanella amazonensis (strain ATCC BAA-1098 / SB2B).